The following is an 80-amino-acid chain: Small ribosomal subunit protein bS18c (80 aa).

Positions 1–19 (MKKFISRPKRSSRRRKKTP) are enriched in basic residues. A disordered region spans residues 1-24 (MKKFISRPKRSSRRRKKTPIKPGE).

The protein belongs to the bacterial ribosomal protein bS18 family. In terms of assembly, part of the 30S ribosomal subunit.

It is found in the plastid. The protein localises to the chloroplast. The polypeptide is Small ribosomal subunit protein bS18c (Staurastrum punctulatum (Green alga)).